Reading from the N-terminus, the 464-residue chain is Integrator complex subunit 12 (464 aa).

Positions Gly-42–Ala-98 are disordered. Residues Lys-69–Leu-84 are compositionally biased toward low complexity. A compositionally biased stretch (basic and acidic residues) spans Ala-85–Ala-98. The PHD-type zinc finger occupies Gly-156–Gln-212. Disordered regions lie at residues Met-216–Lys-252 and Thr-312–Asn-445. The segment covering Pro-227–Ala-239 has biased composition (low complexity). Positions Thr-312–Lys-329 are enriched in polar residues. A compositionally biased stretch (low complexity) spans Ser-339–Leu-371. Residues Ser-372–Lys-382 are compositionally biased toward polar residues. Residues Gly-384 to Asn-421 show a composition bias toward low complexity. Over residues Ser-428–Asn-445 the composition is skewed to polar residues.

The protein belongs to the Integrator subunit 12 family. In terms of assembly, component of the Integrator complex, composed of core subunits INTS1, INTS2, INTS3, INTS4, INTS5, INTS6, INTS7, INTS8, INTS9/RC74, INTS10, INTS11/CPSF3L, INTS12, INTS13, INTS14 and INTS15. The core complex associates with protein phosphatase 2A subunits PPP2CA and PPP2R1A, to form the Integrator-PP2A (INTAC) complex.

Its subcellular location is the nucleus. In terms of biological role, component of the integrator complex, a multiprotein complex that terminates RNA polymerase II (Pol II) transcription in the promoter-proximal region of genes. The integrator complex provides a quality checkpoint during transcription elongation by driving premature transcription termination of transcripts that are unfavorably configured for transcriptional elongation: the complex terminates transcription by (1) catalyzing dephosphorylation of the C-terminal domain (CTD) of Pol II subunit POLR2A/RPB1 and SUPT5H/SPT5, (2) degrading the exiting nascent RNA transcript via endonuclease activity and (3) promoting the release of Pol II from bound DNA. The integrator complex is also involved in terminating the synthesis of non-coding Pol II transcripts, such as enhancer RNAs (eRNAs), small nuclear RNAs (snRNAs), telomerase RNAs and long non-coding RNAs (lncRNAs). This is Integrator complex subunit 12 (ints12) from Xenopus laevis (African clawed frog).